The primary structure comprises 645 residues: Serine/threonine-protein kinase Nek11 (645 aa).

The 259-residue stretch at 29–287 folds into the Protein kinase domain; that stretch reads YVLQQKLGSG…AIEILKIPYL (259 aa). ATP contacts are provided by residues 35–43 and K61; that span reads LGSGSFGTV. D158 acts as the Proton acceptor in catalysis. Position 273 is a phosphoserine; by CHEK1 (S273). Positions 346–385 form a coiled coil; sequence RLRKLQAADEKARKLKKIVEEKYEENSKRMQELRSRNFQQ. The disordered stretch occupies residues 399 to 445; sequence GMEEKEEQPEGRLSCSPQDEDEERWQGREEESDEPTLENLPESQPIP.

This sequence belongs to the protein kinase superfamily. NEK Ser/Thr protein kinase family. NIMA subfamily. Interacts with isoform 1 of NEK2. The cofactor is Mn(2+). Mg(2+) serves as cofactor. In terms of processing, phosphorylated by NEK2. Phosphorylation at Ser-273 is important for its activation. In terms of tissue distribution, poorly expressed in cerebellum, trachea, lung, appendix, and uterus.

The protein localises to the nucleus. It localises to the nucleolus. It catalyses the reaction L-seryl-[protein] + ATP = O-phospho-L-seryl-[protein] + ADP + H(+). It carries out the reaction L-threonyl-[protein] + ATP = O-phospho-L-threonyl-[protein] + ADP + H(+). Autorepressed by intramolecular binding of the C-terminus which dissociates following phosphorylation by NEK2 isoform 1 in G1/S-arrested cells. NEK2 isoform 2 is largely not present in the nucleolus, and does not appear to phosphorylate NEK11. Activated in response to DNA damage. Inhibited by zinc. In terms of biological role, protein kinase which plays an important role in the G2/M checkpoint response to DNA damage. Controls degradation of CDC25A by directly phosphorylating it on residues whose phosphorylation is required for BTRC-mediated polyubiquitination and degradation. This Homo sapiens (Human) protein is Serine/threonine-protein kinase Nek11.